The sequence spans 153 residues: Endoribonuclease YbeY (153 aa).

Zn(2+)-binding residues include H118, H122, and H128.

The protein belongs to the endoribonuclease YbeY family. The cofactor is Zn(2+).

The protein localises to the cytoplasm. Functionally, single strand-specific metallo-endoribonuclease involved in late-stage 70S ribosome quality control and in maturation of the 3' terminus of the 16S rRNA. This is Endoribonuclease YbeY from Clostridioides difficile (strain 630) (Peptoclostridium difficile).